The chain runs to 61 residues: Large ribosomal subunit protein bL32 (61 aa).

The protein belongs to the bacterial ribosomal protein bL32 family.

In Phytoplasma mali (strain AT), this protein is Large ribosomal subunit protein bL32.